The primary structure comprises 92 residues: Putative pterin-4-alpha-carbinolamine dehydratase (92 aa).

It belongs to the pterin-4-alpha-carbinolamine dehydratase family.

It catalyses the reaction (4aS,6R)-4a-hydroxy-L-erythro-5,6,7,8-tetrahydrobiopterin = (6R)-L-erythro-6,7-dihydrobiopterin + H2O. This is Putative pterin-4-alpha-carbinolamine dehydratase from Picosynechococcus sp. (strain ATCC 27264 / PCC 7002 / PR-6) (Agmenellum quadruplicatum).